Reading from the N-terminus, the 479-residue chain is Glutamyl-tRNA(Gln) amidotransferase subunit A (479 aa).

Residues Lys71 and Ser146 each act as charge relay system in the active site. Catalysis depends on Ser170, which acts as the Acyl-ester intermediate.

It belongs to the amidase family. GatA subfamily. As to quaternary structure, heterotrimer of A, B and C subunits.

The enzyme catalyses L-glutamyl-tRNA(Gln) + L-glutamine + ATP + H2O = L-glutaminyl-tRNA(Gln) + L-glutamate + ADP + phosphate + H(+). Functionally, allows the formation of correctly charged Gln-tRNA(Gln) through the transamidation of misacylated Glu-tRNA(Gln) in organisms which lack glutaminyl-tRNA synthetase. The reaction takes place in the presence of glutamine and ATP through an activated gamma-phospho-Glu-tRNA(Gln). In Lactobacillus johnsonii (strain CNCM I-12250 / La1 / NCC 533), this protein is Glutamyl-tRNA(Gln) amidotransferase subunit A.